Here is a 230-residue protein sequence, read N- to C-terminus: Germin-like protein 5-1 (230 aa).

The N-terminal stretch at 1–20 is a signal peptide; the sequence is MAMVGRSLLLLLLLVTLAAG. A disulfide bridge connects residues Cys38 and Cys53. Positions 86–219 constitute a Cupin type-1 domain; that stretch reads YGFTARSVDI…TLLTDEATVD (134 aa). 4 residues coordinate Mn(2+): His119, His121, Glu126, and His167. Asn172 carries an N-linked (GlcNAc...) asparagine glycan.

The protein belongs to the germin family. As to quaternary structure, oligomer (believed to be a pentamer but probably hexamer).

It localises to the secreted. The protein localises to the extracellular space. It is found in the apoplast. May play a role in plant defense. Probably has no oxalate oxidase activity even if the active site is conserved. The chain is Germin-like protein 5-1 from Oryza sativa subsp. japonica (Rice).